Reading from the N-terminus, the 274-residue chain is tRNA-cytidine(32) 2-sulfurtransferase (274 aa).

Positions 40 to 45 match the PP-loop motif motif; the sequence is SGGKDS. [4Fe-4S] cluster contacts are provided by C115, C118, and C206.

This sequence belongs to the TtcA family. In terms of assembly, homodimer. Mg(2+) is required as a cofactor. Requires [4Fe-4S] cluster as cofactor.

It is found in the cytoplasm. The enzyme catalyses cytidine(32) in tRNA + S-sulfanyl-L-cysteinyl-[cysteine desulfurase] + AH2 + ATP = 2-thiocytidine(32) in tRNA + L-cysteinyl-[cysteine desulfurase] + A + AMP + diphosphate + H(+). It functions in the pathway tRNA modification. Catalyzes the ATP-dependent 2-thiolation of cytidine in position 32 of tRNA, to form 2-thiocytidine (s(2)C32). The sulfur atoms are provided by the cysteine/cysteine desulfurase (IscS) system. The polypeptide is tRNA-cytidine(32) 2-sulfurtransferase (Pseudomonas putida (strain W619)).